Reading from the N-terminus, the 210-residue chain is Fibrillarin-like rRNA/tRNA 2'-O-methyltransferase (210 aa).

S-adenosyl-L-methionine-binding positions include Thr70–Thr71, Glu88–Tyr89, Asp113–Ala114, and Asp133–Gln136.

The protein belongs to the methyltransferase superfamily. Fibrillarin family. As to quaternary structure, interacts with nop5. Component of box C/D small ribonucleoprotein (sRNP) particles that contain rpl7ae, FlpA and nop5, plus a guide RNA.

Its function is as follows. Involved in pre-rRNA and tRNA processing. Utilizes the methyl donor S-adenosyl-L-methionine to catalyze the site-specific 2'-hydroxyl methylation of ribose moieties in rRNA and tRNA. Site specificity is provided by a guide RNA that base pairs with the substrate. Methylation occurs at a characteristic distance from the sequence involved in base pairing with the guide RNA. This chain is Fibrillarin-like rRNA/tRNA 2'-O-methyltransferase, found in Archaeoglobus fulgidus (strain ATCC 49558 / DSM 4304 / JCM 9628 / NBRC 100126 / VC-16).